Here is a 580-residue protein sequence, read N- to C-terminus: Isocitrate lyase (580 aa).

106 to 108 lines the substrate pocket; sequence SGW. Aspartate 177 contacts Mg(2+). Catalysis depends on cysteine 215, which acts as the Proton acceptor. Substrate contacts are provided by residues 216-217, arginine 252, 441-445, and threonine 476; these read GH and NLSPS. Residues 578–580 carry the Microbody targeting signal motif; that stretch reads SRM.

The protein belongs to the isocitrate lyase/PEP mutase superfamily. Isocitrate lyase family. As to quaternary structure, homotetramer. It depends on Mg(2+) as a cofactor.

The protein localises to the glyoxysome. The catalysed reaction is D-threo-isocitrate = glyoxylate + succinate. It functions in the pathway carbohydrate metabolism; glyoxylate cycle; (S)-malate from isocitrate: step 1/2. Involved in storage lipid mobilization during the growth of higher plant seedling. This Pinus taeda (Loblolly pine) protein is Isocitrate lyase (ICL 8).